A 472-amino-acid polypeptide reads, in one-letter code: Protein DML1 (472 aa).

Positions 441–463 (GDEREEMKQELGDMASKYEHGWE) are enriched in basic and acidic residues. Residues 441-472 (GDEREEMKQELGDMASKYEHGWEEESDDDDDY) are disordered.

Belongs to the misato family.

The protein resides in the mitochondrion. Its function is as follows. Involved in the partitioning of the mitochondrial organelle and mitochondrial DNA (mtDNA) inheritance. The protein is Protein DML1 (DML1) of Yarrowia lipolytica (strain CLIB 122 / E 150) (Yeast).